Here is a 296-residue protein sequence, read N- to C-terminus: Fructose-bisphosphate aldolase class 1 (296 aa).

The active-site Proton acceptor is the glutamate 175. Lysine 212 (schiff-base intermediate with dihydroxyacetone-P) is an active-site residue.

The protein belongs to the class I fructose-bisphosphate aldolase family.

The catalysed reaction is beta-D-fructose 1,6-bisphosphate = D-glyceraldehyde 3-phosphate + dihydroxyacetone phosphate. It participates in carbohydrate degradation; glycolysis; D-glyceraldehyde 3-phosphate and glycerone phosphate from D-glucose: step 4/4. This Staphylococcus aureus (strain MRSA252) protein is Fructose-bisphosphate aldolase class 1.